Consider the following 365-residue polypeptide: UDP-N-acetylglucosamine--N-acetylmuramyl-(pentapeptide) pyrophosphoryl-undecaprenol N-acetylglucosamine transferase (365 aa).

UDP-N-acetyl-alpha-D-glucosamine-binding positions include 10–12 (TGG), Asn128, Arg170, Ser199, Ile250, and Gln295.

It belongs to the glycosyltransferase 28 family. MurG subfamily.

The protein resides in the cell inner membrane. The enzyme catalyses di-trans,octa-cis-undecaprenyl diphospho-N-acetyl-alpha-D-muramoyl-L-alanyl-D-glutamyl-meso-2,6-diaminopimeloyl-D-alanyl-D-alanine + UDP-N-acetyl-alpha-D-glucosamine = di-trans,octa-cis-undecaprenyl diphospho-[N-acetyl-alpha-D-glucosaminyl-(1-&gt;4)]-N-acetyl-alpha-D-muramoyl-L-alanyl-D-glutamyl-meso-2,6-diaminopimeloyl-D-alanyl-D-alanine + UDP + H(+). Its pathway is cell wall biogenesis; peptidoglycan biosynthesis. Its function is as follows. Cell wall formation. Catalyzes the transfer of a GlcNAc subunit on undecaprenyl-pyrophosphoryl-MurNAc-pentapeptide (lipid intermediate I) to form undecaprenyl-pyrophosphoryl-MurNAc-(pentapeptide)GlcNAc (lipid intermediate II). This Chlorobium luteolum (strain DSM 273 / BCRC 81028 / 2530) (Pelodictyon luteolum) protein is UDP-N-acetylglucosamine--N-acetylmuramyl-(pentapeptide) pyrophosphoryl-undecaprenol N-acetylglucosamine transferase.